The primary structure comprises 160 residues: Transcription antitermination protein NusB (160 aa).

Belongs to the NusB family.

Its function is as follows. Involved in transcription antitermination. Required for transcription of ribosomal RNA (rRNA) genes. Binds specifically to the boxA antiterminator sequence of the ribosomal RNA (rrn) operons. The protein is Transcription antitermination protein NusB of Rhizobium rhizogenes (strain K84 / ATCC BAA-868) (Agrobacterium radiobacter).